The sequence spans 416 residues: Serine hydroxymethyltransferase (416 aa).

Residues leucine 121 and 125–127 (GHL) each bind (6S)-5,6,7,8-tetrahydrofolate. N6-(pyridoxal phosphate)lysine is present on lysine 229. (6S)-5,6,7,8-tetrahydrofolate-binding positions include glutamate 245 and 354–356 (SPF).

Belongs to the SHMT family. As to quaternary structure, homodimer. Pyridoxal 5'-phosphate is required as a cofactor.

It is found in the cytoplasm. The enzyme catalyses (6R)-5,10-methylene-5,6,7,8-tetrahydrofolate + glycine + H2O = (6S)-5,6,7,8-tetrahydrofolate + L-serine. It functions in the pathway one-carbon metabolism; tetrahydrofolate interconversion. It participates in amino-acid biosynthesis; glycine biosynthesis; glycine from L-serine: step 1/1. Its function is as follows. Catalyzes the reversible interconversion of serine and glycine with tetrahydrofolate (THF) serving as the one-carbon carrier. This reaction serves as the major source of one-carbon groups required for the biosynthesis of purines, thymidylate, methionine, and other important biomolecules. Also exhibits THF-independent aldolase activity toward beta-hydroxyamino acids, producing glycine and aldehydes, via a retro-aldol mechanism. The chain is Serine hydroxymethyltransferase from Aliivibrio fischeri (strain ATCC 700601 / ES114) (Vibrio fischeri).